Here is a 487-residue protein sequence, read N- to C-terminus: MPLPVQVFNLQSAVEPMQIDADPQDDQQNMPDVNYVVENPTLDLEQYASSYSGLMRIERLQFIADRCPQLRVEALKMALSFVQRTFNVDVYEDIHRKLAEASREVQNAPDAVPEGSMEPPALDTSWVEATRKKALLKLEKLDTDLKNYKGNSIKESIRRGHDDLGDHYLDCGDLSNALKCYSRARDYCTSAKHVINMCLNVIKVSVYLQNWSHVLSYVSKAESTPEIAEQRGERDSQTQAVLTKLKCAAGLAELAARKYKQAAKCFLLASFDHCDFPELLSPSNVAVYGGLCALATFDRQELQRNVISSSSFKLFLELEPQVRDIIFKFYESKYASCLKMLDEIKDNLLLDMYLAPHVRTLYTQIRNRALIQYFSPYVSADMYKMATAFNTTVSALEDELTQLILEGLINARIDSHSKILYARDVDQRSTTFEKSLQMGREFQRRAKAMILRAAVLRNQIHVKSPPREGSQGELTPANSQSRLSTNM.

Residues 103–123 (REVQNAPDAVPEGSMEPPALD) are disordered. The PCI domain maps to 265-427 (CFLLASFDHC…KILYARDVDQ (163 aa)). The segment at 461–487 (HVKSPPREGSQGELTPANSQSRLSTNM) is disordered. The span at 472-487 (GELTPANSQSRLSTNM) shows a compositional bias: polar residues.

Belongs to the CSN1 family. In terms of assembly, component of the CSN complex, probably composed of cops1, cops2, cops3, cops4, cops5, cops6, cops7, cops8 and cops9.

It localises to the cytoplasm. It is found in the nucleus. Essential component of the COP9 signalosome complex (CSN), a complex involved in various cellular and developmental processes. The CSN complex is an essential regulator of the ubiquitin (Ubl) conjugation pathway by mediating the deneddylation of the cullin subunits of E3 ligase complexes, leading to modify the Ubl ligase activity. The polypeptide is COP9 signalosome complex subunit 1 (csn1) (Xenopus laevis (African clawed frog)).